The sequence spans 344 residues: L-threonine 3-dehydrogenase (344 aa).

C42 contacts Zn(2+). Residues T44 and H47 each act as charge relay system in the active site. Residues H67, E68, C97, C100, C103, and C111 each contribute to the Zn(2+) site. Residues I179, D199, R204, 266–268 (LGI), and 290–291 (IY) contribute to the NAD(+) site.

It belongs to the zinc-containing alcohol dehydrogenase family. As to quaternary structure, homotetramer. Requires Zn(2+) as cofactor.

The protein localises to the cytoplasm. It catalyses the reaction L-threonine + NAD(+) = (2S)-2-amino-3-oxobutanoate + NADH + H(+). It functions in the pathway amino-acid degradation; L-threonine degradation via oxydo-reductase pathway; glycine from L-threonine: step 1/2. Catalyzes the NAD(+)-dependent oxidation of L-threonine to 2-amino-3-ketobutyrate. This is L-threonine 3-dehydrogenase from Sinorhizobium medicae (strain WSM419) (Ensifer medicae).